Reading from the N-terminus, the 277-residue chain is Thymidylate synthase (277 aa).

Arginine 21 provides a ligand contact to dUMP. Residue histidine 51 coordinates (6R)-5,10-methylene-5,6,7,8-tetrahydrofolate. 126-127 (RR) lines the dUMP pocket. The Nucleophile role is filled by cysteine 159. Residues 179-182 (RSGD), asparagine 190, and 220-222 (HLY) each bind dUMP. Aspartate 182 is a binding site for (6R)-5,10-methylene-5,6,7,8-tetrahydrofolate. Alanine 276 serves as a coordination point for (6R)-5,10-methylene-5,6,7,8-tetrahydrofolate.

The protein belongs to the thymidylate synthase family. Bacterial-type ThyA subfamily. As to quaternary structure, homodimer.

Its subcellular location is the cytoplasm. The catalysed reaction is dUMP + (6R)-5,10-methylene-5,6,7,8-tetrahydrofolate = 7,8-dihydrofolate + dTMP. It participates in pyrimidine metabolism; dTTP biosynthesis. Its function is as follows. Catalyzes the reductive methylation of 2'-deoxyuridine-5'-monophosphate (dUMP) to 2'-deoxythymidine-5'-monophosphate (dTMP) while utilizing 5,10-methylenetetrahydrofolate (mTHF) as the methyl donor and reductant in the reaction, yielding dihydrofolate (DHF) as a by-product. This enzymatic reaction provides an intracellular de novo source of dTMP, an essential precursor for DNA biosynthesis. This is Thymidylate synthase from Alcanivorax borkumensis (strain ATCC 700651 / DSM 11573 / NCIMB 13689 / SK2).